The following is a 154-amino-acid chain: Methylglyoxal synthase (154 aa).

The region spanning 6-154 is the MGS-like domain; the sequence is SPLPANKAIA…AYMARRAQGN (149 aa). Substrate contacts are provided by residues H19, K23, 45–48, and 65–66; these read TGTT and SG. D71 serves as the catalytic Proton donor/acceptor. H98 provides a ligand contact to substrate.

Belongs to the methylglyoxal synthase family.

The enzyme catalyses dihydroxyacetone phosphate = methylglyoxal + phosphate. Its function is as follows. Catalyzes the formation of methylglyoxal from dihydroxyacetone phosphate. This Cellvibrio japonicus (strain Ueda107) (Pseudomonas fluorescens subsp. cellulosa) protein is Methylglyoxal synthase.